Here is a 126-residue protein sequence, read N- to C-terminus: Holo-[acyl-carrier-protein] synthase (126 aa).

Mg(2+) is bound by residues Asp-6 and Glu-55.

This sequence belongs to the P-Pant transferase superfamily. AcpS family. Requires Mg(2+) as cofactor.

It localises to the cytoplasm. The enzyme catalyses apo-[ACP] + CoA = holo-[ACP] + adenosine 3',5'-bisphosphate + H(+). Functionally, transfers the 4'-phosphopantetheine moiety from coenzyme A to a Ser of acyl-carrier-protein. The protein is Holo-[acyl-carrier-protein] synthase of Chlorobium limicola (strain DSM 245 / NBRC 103803 / 6330).